Reading from the N-terminus, the 173-residue chain is Ribulose bisphosphate carboxylase small subunit, chloroplastic 1 (173 aa).

The N-terminal 49 residues, 1–49, are a transit peptide targeting the chloroplast; it reads MASIPATVATVAQANMVAPFTGLKANAAFPVTKKVNDFSTLPSNGGRVQ.

It belongs to the RuBisCO small chain family. As to quaternary structure, heterohexadecamer of 8 large and 8 small subunits.

The protein resides in the plastid. Its subcellular location is the chloroplast. RuBisCO catalyzes two reactions: the carboxylation of D-ribulose 1,5-bisphosphate, the primary event in carbon dioxide fixation, as well as the oxidative fragmentation of the pentose substrate. Both reactions occur simultaneously and in competition at the same active site. Although the small subunit is not catalytic it is essential for maximal activity. The chain is Ribulose bisphosphate carboxylase small subunit, chloroplastic 1 from Flaveria pringlei.